The chain runs to 60 residues: MESMKMKLIVVLMVAIVAFSAVGNVAAQTEAPAPSPTSDAAMFVPALFASVAALASGFLF.

The signal sequence occupies residues 1–27; that stretch reads MESMKMKLIVVLMVAIVAFSAVGNVAA. Residue Q28 is modified to Pyrrolidone carboxylic acid. P32, P34, and P36 each carry 4-hydroxyproline. Residues P32, P34, and P36 are each glycosylated (O-linked (Ara...) hydroxyproline). Residue S38 is the site of GPI-anchor amidated serine attachment. Residues 39-60 constitute a propeptide, removed in mature form; it reads DAAMFVPALFASVAALASGFLF.

Belongs to the AG-peptide AGP family. Post-translationally, contains 4-hydroxyproline; hydroxylated on Pro-32, Pro-34 and Pro-36. O-glycosylated on hydroxyprolines; noncontiguous hydroxylproline residues are glycosylated with arabinogalactan. In terms of tissue distribution, expressed in reproductive tissues. Expressed in chalaza, funiculus, stigma, septum, style and transmitting tract.

The protein resides in the cell membrane. Its function is as follows. Proteoglycan that seems to be implicated in diverse developmental roles such as differentiation, cell-cell recognition, embryogenesis and programmed cell death. This chain is Arabinogalactan protein 12, found in Arabidopsis thaliana (Mouse-ear cress).